Consider the following 119-residue polypeptide: Large ribosomal subunit protein uL18 (119 aa).

Belongs to the universal ribosomal protein uL18 family. As to quaternary structure, part of the 50S ribosomal subunit; part of the 5S rRNA/L5/L18/L25 subcomplex. Contacts the 5S and 23S rRNAs.

In terms of biological role, this is one of the proteins that bind and probably mediate the attachment of the 5S RNA into the large ribosomal subunit, where it forms part of the central protuberance. The chain is Large ribosomal subunit protein uL18 from Clostridium botulinum (strain Loch Maree / Type A3).